The chain runs to 543 residues: 2-succinyl-5-enolpyruvyl-6-hydroxy-3-cyclohexene-1-carboxylate synthase (543 aa).

Belongs to the TPP enzyme family. MenD subfamily. Homodimer. Mg(2+) is required as a cofactor. The cofactor is Mn(2+). Thiamine diphosphate serves as cofactor.

It catalyses the reaction isochorismate + 2-oxoglutarate + H(+) = 5-enolpyruvoyl-6-hydroxy-2-succinyl-cyclohex-3-ene-1-carboxylate + CO2. The protein operates within quinol/quinone metabolism; 1,4-dihydroxy-2-naphthoate biosynthesis; 1,4-dihydroxy-2-naphthoate from chorismate: step 2/7. It functions in the pathway quinol/quinone metabolism; menaquinone biosynthesis. Its function is as follows. Catalyzes the thiamine diphosphate-dependent decarboxylation of 2-oxoglutarate and the subsequent addition of the resulting succinic semialdehyde-thiamine pyrophosphate anion to isochorismate to yield 2-succinyl-5-enolpyruvyl-6-hydroxy-3-cyclohexene-1-carboxylate (SEPHCHC). This chain is 2-succinyl-5-enolpyruvyl-6-hydroxy-3-cyclohexene-1-carboxylate synthase, found in Corynebacterium glutamicum (strain R).